The sequence spans 469 residues: MKHAVKHIHFVGVGGAGMSGIAEILHNLGYTVSGSDQADGAVTRRLAELGIRIFVGHDAAHIAGAQAVVTSTAVKGDNPEVIAARAARIPVVPRAVMLAELMRLKSGIAIAGTHGKTTTTSLVTSVLAEAGLDPTFVIGGKLNSAGANSALGKGDYIVVEADESDASFLNLLPVLSVITNIDADHMDTYGHDFARLKQAFVEFLHKMPFYGAAILCGDDPGVRSIIPMISRPVITYGLGEDVQVRAVDVVALPGGQMRFTCQRRNGTVLPDLEITLNLPGVHSVRNALATIAVATELELPDAPIVSALAKFSGVGRRFQRWGDWPCAAGGEFTLIDDYGHHPVEMAAVIAAARGAFPGRRLVLAFQPHRYTRTRDCFEDFVKVMGSADAILLTEVYAAGEAPIVAADGRSLTRALRVAGKVDPLFVDDVNELPATIAEQALAGDVVIAMGAGTIGGVPARVVELVKERA.

112–118 (GTHGKTT) lines the ATP pocket.

This sequence belongs to the MurCDEF family.

It localises to the cytoplasm. It catalyses the reaction UDP-N-acetyl-alpha-D-muramate + L-alanine + ATP = UDP-N-acetyl-alpha-D-muramoyl-L-alanine + ADP + phosphate + H(+). It functions in the pathway cell wall biogenesis; peptidoglycan biosynthesis. Its function is as follows. Cell wall formation. In Leptothrix cholodnii (strain ATCC 51168 / LMG 8142 / SP-6) (Leptothrix discophora (strain SP-6)), this protein is UDP-N-acetylmuramate--L-alanine ligase.